Reading from the N-terminus, the 223-residue chain is MQWAAGRRWAWITLFLTIVAVLIQAVWLWLGTQSFVFQREEIAQLARQYAGLDHELAFSRLIVELRRLHPGHVLPDEELQWVFVNAGGWMGAMCLLHASLSEYVLLFGTALGSHGHSGRYWAEISDTIISGTFHQWREGTTKSEVYYPGETVVHGPGEATAVEWGPNTWMVEYGRGVIPSTLAFALSDTIFSTQDFLTLFYTLRAYARGLRLELTTYLFGQDS.

Topologically, residues 1 to 9 (MQWAAGRRW) are lumenal. A targeting to endoplasmic reticulum-associated lipid droplets region spans residues 2 to 8 (QWAAGRR). A helical transmembrane segment spans residues 10–30 (AWITLFLTIVAVLIQAVWLWL). Residues 31–223 (GTQSFVFQRE…LTTYLFGQDS (193 aa)) lie on the Cytoplasmic side of the membrane. The important for ligand-binding stretch occupies residues 99–106 (SLSEYVLL). The segment at 177–223 (VIPSTLAFALSDTIFSTQDFLTLFYTLRAYARGLRLELTTYLFGQDS) is C-terminal hydrophobic region.

It belongs to the ERG2 family. As to quaternary structure, homotrimer. Forms a ternary complex with ANK2 and ITPR3. The complex is disrupted by agonists. Interacts with KCNA4. Interacts with KCNA2; cocaine consumption leads to increased interaction. Interacts with RNF112 in an oxidative stress-regulated manner.

The protein resides in the nucleus inner membrane. The protein localises to the nucleus outer membrane. It localises to the nucleus envelope. Its subcellular location is the cytoplasmic vesicle. It is found in the endoplasmic reticulum membrane. The protein resides in the membrane. The protein localises to the lipid droplet. It localises to the cell junction. Its subcellular location is the cell membrane. It is found in the cell projection. The protein resides in the growth cone. The protein localises to the postsynaptic density membrane. Functionally, functions in lipid transport from the endoplasmic reticulum and is involved in a wide array of cellular functions probably through regulation of the biogenesis of lipid microdomains at the plasma membrane. Involved in the regulation of different receptors it plays a role in BDNF signaling and EGF signaling. Also regulates ion channels like the potassium channel and could modulate neurotransmitter release. Plays a role in calcium signaling through modulation together with ANK2 of the ITP3R-dependent calcium efflux at the endoplasmic reticulum. Plays a role in several other cell functions including proliferation, survival and death. Originally identified for its ability to bind various psychoactive drugs it is involved in learning processes, memory and mood alteration. Necessary for proper mitochondrial axonal transport in motor neurons, in particular the retrograde movement of mitochondria. Plays a role in protecting cells against oxidative stress-induced cell death via its interaction with RNF112. The polypeptide is Sigma non-opioid intracellular receptor 1 (SIGMAR1) (Trichosurus vulpecula (Brush-tailed possum)).